The sequence spans 141 residues: Large ribosomal subunit protein uL13 (141 aa).

Belongs to the universal ribosomal protein uL13 family. As to quaternary structure, part of the 50S ribosomal subunit.

In terms of biological role, this protein is one of the early assembly proteins of the 50S ribosomal subunit, although it is not seen to bind rRNA by itself. It is important during the early stages of 50S assembly. In Helicobacter acinonychis (strain Sheeba), this protein is Large ribosomal subunit protein uL13.